A 446-amino-acid polypeptide reads, in one-letter code: Casein kinase I homolog 1 (446 aa).

Positions 12–274 constitute a Protein kinase domain; the sequence is YKVGRRIGEG…FDATPDYDYL (263 aa). Residues 18-26 and lysine 41 each bind ATP; that span reads IGEGSFGVI. The active-site Proton acceptor is the aspartate 131. Residues 308–430 form a disordered region; sequence KSRNAETENQ…ETEAPKKKKS (123 aa). Phosphoserine is present on serine 329. A compositionally biased stretch (polar residues) spans 332–345; that stretch reads PALQNHASTQNVVS. Over residues 346–355 the composition is skewed to basic and acidic residues; sequence KRSDYEKPFA. Residues 360–397 are compositionally biased toward polar residues; that stretch reads NSASDSAEPNQNSLPNPPTETKATTTVPDRSGLATNQP. Basic and acidic residues predominate over residues 401 to 412; that stretch reads DVHDSSEERVTR.

The protein belongs to the protein kinase superfamily. CK1 Ser/Thr protein kinase family. Casein kinase I subfamily.

The protein resides in the cytoplasm. The catalysed reaction is L-seryl-[protein] + ATP = O-phospho-L-seryl-[protein] + ADP + H(+). The enzyme catalyses L-threonyl-[protein] + ATP = O-phospho-L-threonyl-[protein] + ADP + H(+). In terms of biological role, casein kinases are operationally defined by their preferential utilization of acidic proteins such as caseins as substrates. The sequence is that of Casein kinase I homolog 1 (cki1) from Schizosaccharomyces pombe (strain 972 / ATCC 24843) (Fission yeast).